A 295-amino-acid chain; its full sequence is Glutamyl-Q tRNA(Asp) synthetase (295 aa).

L-glutamate contacts are provided by residues 5–9 (RFAPS) and glutamate 41. Residues 8–18 (PSPTGLLHIGS) carry the 'HIGH' region motif. The Zn(2+) site is built by cysteine 97, cysteine 99, tyrosine 117, and cysteine 121. 2 residues coordinate L-glutamate: tyrosine 178 and arginine 196. The 'KMSKS' region motif lies at 234 to 238 (KWSKQ). Residue lysine 237 participates in ATP binding.

Belongs to the class-I aminoacyl-tRNA synthetase family. GluQ subfamily. Zn(2+) serves as cofactor.

Functionally, catalyzes the tRNA-independent activation of glutamate in presence of ATP and the subsequent transfer of glutamate onto a tRNA(Asp). Glutamate is transferred on the 2-amino-5-(4,5-dihydroxy-2-cyclopenten-1-yl) moiety of the queuosine in the wobble position of the QUC anticodon. In Neisseria meningitidis serogroup B (strain ATCC BAA-335 / MC58), this protein is Glutamyl-Q tRNA(Asp) synthetase.